A 120-amino-acid chain; its full sequence is Phosphoribosyl-ATP pyrophosphatase (120 aa).

The disordered stretch occupies residues 97–120; the sequence is REGTSGLVEKASRPAKKDSGTADS. A compositionally biased stretch (basic and acidic residues) spans 106–120; the sequence is KASRPAKKDSGTADS.

This sequence belongs to the PRA-PH family.

The protein resides in the cytoplasm. It carries out the reaction 1-(5-phospho-beta-D-ribosyl)-ATP + H2O = 1-(5-phospho-beta-D-ribosyl)-5'-AMP + diphosphate + H(+). The protein operates within amino-acid biosynthesis; L-histidine biosynthesis; L-histidine from 5-phospho-alpha-D-ribose 1-diphosphate: step 2/9. This is Phosphoribosyl-ATP pyrophosphatase from Rhodopirellula baltica (strain DSM 10527 / NCIMB 13988 / SH1).